The chain runs to 93 residues: Small ribosomal subunit protein mS33 (93 aa).

It belongs to the mitochondrion-specific ribosomal protein mS33 family. As to quaternary structure, component of the mitochondrial small ribosomal subunit (mt-SSU). Mature yeast 74S mitochondrial ribosomes consist of a small (37S) and a large (54S) subunit. The 37S small subunit contains a 15S ribosomal RNA (15S mt-rRNA) and at least 32 different proteins. The 54S large subunit contains a 21S rRNA (21S mt-rRNA) and at least 45 different proteins.

It localises to the mitochondrion. Component of the mitochondrial ribosome (mitoribosome), a dedicated translation machinery responsible for the synthesis of mitochondrial genome-encoded proteins, including at least some of the essential transmembrane subunits of the mitochondrial respiratory chain. The mitoribosomes are attached to the mitochondrial inner membrane and translation products are cotranslationally integrated into the membrane. This chain is Small ribosomal subunit protein mS33 (rsm27), found in Schizosaccharomyces pombe (strain 972 / ATCC 24843) (Fission yeast).